Consider the following 363-residue polypeptide: MPNSFGKLFTVTTWGESHGASVGVVVDGCPPNLPLSVEEIQTELDRRRPGQSDIVTPRKEEDRVEILSGLFEGKTTGTPLTMMVRNADQRPEAYAEMREKFRPSHADYTYQAKFGIRDHRGGGRSSARETIGRVAAGAIAQKILRLAGGIEIRAFVTQIQDICVPALTAFPSREEVEATPIRCPHAATAAAMIERIKAVRSQGDSVGGVIECRVRGVPAGLGEPVFDRLEADLGKAMLSLPATKGFEIGSGFAGTRLKGSEHNDPFVMRDGRVTTTTNHSGGVQGGISNGAEIVFRVAFKPTATILQPQQTVDVHGADTELAARGRHDPCVLPRAVPIVEAMTALVLVDHWMRQSAQCGTFKF.

Arg-47 is an NADP(+) binding site. FMN contacts are provided by residues 124–126, Gly-285, 300–304, and Arg-326; these read RSS and KPTAT.

The protein belongs to the chorismate synthase family. Homotetramer. FMNH2 is required as a cofactor.

It catalyses the reaction 5-O-(1-carboxyvinyl)-3-phosphoshikimate = chorismate + phosphate. The protein operates within metabolic intermediate biosynthesis; chorismate biosynthesis; chorismate from D-erythrose 4-phosphate and phosphoenolpyruvate: step 7/7. Its function is as follows. Catalyzes the anti-1,4-elimination of the C-3 phosphate and the C-6 proR hydrogen from 5-enolpyruvylshikimate-3-phosphate (EPSP) to yield chorismate, which is the branch point compound that serves as the starting substrate for the three terminal pathways of aromatic amino acid biosynthesis. This reaction introduces a second double bond into the aromatic ring system. The polypeptide is Chorismate synthase (Opitutus terrae (strain DSM 11246 / JCM 15787 / PB90-1)).